The following is a 1980-amino-acid chain: MSAHEAGSSGRRRPATFHLHIYPQLPSAGSQTSCRVTATKDSTTSDVIRDVVASLHLDGSKHYVLVEVKESGGEEWVLDASDSPVHRVLLWPRRAQKEHPREDGYYFLLQERNADGSIQYLHVQLLAQPTAACRLVERGLLPRPQADFDDLCNLPELNEANLLQSLKLRFVQQKIYTYAGSILVAINPFKFLPIYNPKYVKMYENQQLGKLEPHVFALADVAYYTMLRKHVNQCIVISGESGSGKTQSTNFLIHCLTALSQKGYASGVERTILGAGPVLEAFGNAKTAHNNNSSRFGKFIQVNYLESGIVRGAVVEKYLLEKSRLVSQEKDERNYHVFYYLLLGVSEEERQEFQLKQPQDYFYLNQHNLNIEDGEDLKHDFERLQQAMEMVGFLPATKKQIFSVLSAILYLGNVTYKKRATGRDEGLEVGPPEVLDTLSQLLKVKRETLVEVLTKRKTITVNDKLILPYSLSEAITARDSMAKSLYSALFDWIVLRINHALLNKKDMEEAVSCLSIGVLDIFGFEDFERNSFEQFCINYANEQLQYYFTQHIFKLEQEEYQGEGISWHNIDYTDNVGCIHLISKKPTGLFYLLDEESNFPHATSHTLLAKFKQQHEDNKYFLGTPVLEPAFIIQHFAGRVKYQIKDFREKNMDYMRPDIVALLRGSDSSYVRQLIGMDPVAVFRWAVLRAAIRAMAVLREAGRLRAERAEKAEAGVSSPVTRSHVEELPRGANTPSEKLYRDLHNQIIKSLKGLPWQGEDPRRLLQSLSRLQKPRTFFLKSKGIKQKQIIPKNLLDSKSLRLIISMTLHDRTTKSLLHLHKKKKPPSISAQFQTSLNKLLEALGKAEPFFIRCIRSNAEKKELCFDDELVLQQLRYTGMLETVRIRRSGYSAKYTFQDFTEQFQVLLPKDVQPCREAIAALLEKLQVDRQNYQIGKTKVFLKETERQALQERLHGEVLRRILLLQSWFRMVLERRHFVQMKHAALTIQACWRSYRVRRTLERTRAAVYLQAAWRGYLQRQAYHHQRHSIIRLQSLCRGHLQRRSFSQMMLEKQKAEQARETAGAEMSEGEPSPVAAGEQPSEHPVEDPESLGVETETWMNSKSPNGLSPKKEIPSPEMETPAQKTVPAESHEKVPSSREKRESRRQRGLEHVERQNKHIQSCREENSTLREPSRKASLETGESFPEDTKEPREDGLETWTETAAPSCPKQVPIVGDPPRSPSPLQRPASLDLDSRVSPVLPSSSLESPQDEDKGENSTKVQDKPESPSGSTQIQRYQHPDTERLATAVEIWRGKKLASAMLSQSLDLSEKPRTAGAALTPTEERRISFSTSDVSKLSPVKTSTEVDGDLSAKKPAGHKKKSEDPSAGPDAGLPTGSQGDSKSAFKRLFLHKAKDKKPSLEGVEETEGSGGQAAQEAPARKTLDVPSSQQHRHTTGEKPLKGKKNRNRKVGQITVSEKWRESVFRKITNANELKFLDEFLLNKVNDLRSQKTPIESLFIEATERFRSNIKTMYSVPNGKIHVGYKDLMENYQIVVSNLAAERGEKDTNLVLNVFQSLLDEFTRSYNKTDFEPVKGKAQKKKRKQERAVQEHNGHVFASYQVNIPQSCEQCLSYIWLMDKALLCSVCKMTCHKKCVHKIQSYCSYTGRRKSELGAEPGHFGVCVDSLTSDKASVPIVLEKLLEHVEMHGLYTEGLYRKSGAANRTRELRQALQTDPATVKLEDFPIHAITGVLKQWLRELPEPLMTFAQYGDFLRAVELPEKQEQLAAIYAVLDHLPEANHTSLERLIFHLVKVALLEDVNRMSPGALAIIFAPCLLRCPDNSDPLTSMKDVLKITTCVEMLIKEQMRKYKVKMEEINHLEAAESIAFRRLSLLRQNAPWPLKLGFSSPYEGVRTKSPRTPVVQDLEELGALPEEAAGGDEDREKEILMERIQSIKEEKEDITYRLPELDPRGSDEENLDSETSASTESLLEERAVRGAAEE.

Serine 2 bears the N-acetylserine mark. The Ras-associating domain occupies 15–114 (ATFHLHIYPQ…YYFLLQERNA (100 aa)). In terms of domain architecture, Myosin motor spans 146–954 (ADFDDLCNLP…ERQALQERLH (809 aa)). 239-246 (GESGSGKT) is a binding site for ATP. Residues 715–736 (GVSSPVTRSHVEELPRGANTPS) form a disordered region. 2 positions are modified to phosphoserine: serine 717 and serine 718. The segment at 845 to 856 (KAEPFFIRCIRS) is actin-binding. The segment at 941-1045 (LKETERQALQ…CRGHLQRRSF (105 aa)) is neck or regulatory domain. 4 consecutive IQ domains span residues 958–978 (LRRI…RHFV), 981–1001 (KHAA…RTLE), 1002–1024 (RTRA…AYHH), and 1025–1054 (QRHS…EKQK). At serine 1046 the chain carries Phosphoserine. A tail region spans residues 1046 to 1980 (SQMMLEKQKA…ERAVRGAAEE (935 aa)). 3 disordered regions span residues 1049–1281 (MLEK…HPDT), 1302–1380 (SQSL…QGDS), and 1394–1449 (DKKP…NRKV). Residues 1097 to 1106 (TWMNSKSPNG) show a composition bias toward polar residues. Phosphoserine is present on residues serine 1108, serine 1115, and serine 1177. 2 stretches are compositionally biased toward basic and acidic residues: residues 1129–1177 (ESHE…RKAS) and 1186–1195 (EDTKEPREDG). Residues serine 1220, serine 1222, serine 1229, serine 1237, serine 1243, and serine 1247 each carry the phosphoserine modification. Residues 1235-1247 (RVSPVLPSSSLES) show a composition bias toward low complexity. Residues 1250-1265 (DEDKGENSTKVQDKPE) show a composition bias toward basic and acidic residues. Phosphoserine is present on residues serine 1266, serine 1268, and serine 1304. Threonine 1319 is modified (phosphothreonine). 3 positions are modified to phosphoserine: serine 1327, serine 1329, and serine 1337. Over residues 1327 to 1344 (SFSTSDVSKLSPVKTSTE) the composition is skewed to polar residues. Residues 1592 to 1641 (GHVFASYQVNIPQSCEQCLSYIWLMDKALLCSVCKMTCHKKCVHKIQSYC) form a Phorbol-ester/DAG-type zinc finger. At serine 1649 the chain carries Phosphoserine. Residues 1663–1848 (DSLTSDKASV…MLIKEQMRKY (186 aa)) form the Rho-GAP domain. The interval 1699–1704 (AANRTR) is interaction with RHOA. Residues 1841–1861 (IKEQMRKYKVKMEEINHLEAA) are a coiled coil. A Phosphoserine modification is found at serine 1886. Residues 1891–1923 (VRTKSPRTPVVQDLEELGALPEEAAGGDEDREK) form a disordered region. Positions 1918–1948 (DEDREKEILMERIQSIKEEKEDITYRLPELD) form a coiled coil. Serine 1932, serine 1952, and serine 1959 each carry phosphoserine. Residues 1937–1953 (KEDITYRLPELDPRGSD) show a composition bias toward basic and acidic residues. The tract at residues 1937–1980 (KEDITYRLPELDPRGSDEENLDSETSASTESLLEERAVRGAAEE) is disordered. Threonine 1965 is subject to Phosphothreonine. The segment covering 1969 to 1980 (LEERAVRGAAEE) has biased composition (basic and acidic residues).

It belongs to the TRAFAC class myosin-kinesin ATPase superfamily. Myosin family. Interacts (via IQ domains) with CALM. Interacts with RHOA. Interacts (via Rho-GAP domain) with ROBO1; this inhibits the interaction with RHOA and the stimulation of RHOA GTPase activity, and thereby increases the levels of active RHOA. Expressed in testis, lung, thymus, brain, liver, spleen and heart muscle. Detected in lung, testis, spleen and liver, and at reduced level in different brain regions (at protein level).

It localises to the cytoplasm. The protein localises to the cell cortex. It is found in the perinuclear region. Its subcellular location is the cytoskeleton. Functionally, myosins are actin-based motor molecules with ATPase activity. Unconventional myosins serve in intracellular movements. Binds actin with high affinity both in the absence and presence of ATP and its mechanochemical activity is inhibited by calcium ions. Also acts as a GTPase activator for RHOA. Plays a role in the regulation of cell migration via its role as RHOA GTPase activator. This is regulated by its interaction with the SLIT2 receptor ROBO1; interaction with ROBO1 impairs interaction with RHOA and subsequent activation of RHOA GTPase activity, and thereby leads to increased levels of active, GTP-bound RHOA. This Rattus norvegicus (Rat) protein is Unconventional myosin-IXb (Myo9b).